The primary structure comprises 246 residues: UDP-N-acetyl-D-mannosaminuronic acid transferase (246 aa).

It belongs to the glycosyltransferase 26 family.

It catalyses the reaction UDP-N-acetyl-alpha-D-mannosaminouronate + N-acetyl-alpha-D-glucosaminyl-di-trans,octa-cis-undecaprenyl diphosphate = beta-D-ManNAcA-(1-&gt;4)-alpha-D-GlcNAc-di-trans,octa-cis-undecaprenyl diphosphate + UDP + H(+). Its pathway is bacterial outer membrane biogenesis; enterobacterial common antigen biosynthesis. Catalyzes the synthesis of Und-PP-GlcNAc-ManNAcA (Lipid II), the second lipid-linked intermediate involved in enterobacterial common antigen (ECA) synthesis. The polypeptide is UDP-N-acetyl-D-mannosaminuronic acid transferase (Klebsiella pneumoniae (strain 342)).